Here is a 78-residue protein sequence, read N- to C-terminus: Major outer membrane lipoprotein Lpp (78 aa).

Residues 1–20 (MNRTKLVLGAVILASTMLAG) form the signal peptide. Cysteine 21 carries the N-palmitoyl cysteine lipid modification. A lipid anchor (S-diacylglycerol cysteine) is attached at cysteine 21. Repeats lie at residues 24–34 (NAKIDQLSSDV) and 38–48 (NAKVDQLSNDV). The stretch at 27–75 (IDQLSSDVQTLNAKVDQLSNDVNAVRADVQAAKDDAARANQRLDNQAQA) forms a coiled coil. Residue lysine 78 is modified to N6-murein peptidoglycan lysine.

The protein belongs to the Lpp family. As to quaternary structure, homotrimer.

It localises to the cell outer membrane. The protein resides in the secreted. The protein localises to the cell wall. Functionally, a highly abundant outer membrane lipoprotein that controls the distance between the inner and outer membranes. The only protein known to be covalently linked to the peptidoglycan network (PGN). Also non-covalently binds the PGN. The link between the cell outer membrane and PGN contributes to maintenance of the structural and functional integrity of the cell envelope, and maintains the correct distance between the PGN and the outer membrane. The protein is Major outer membrane lipoprotein Lpp of Yersinia pestis.